Here is a 480-residue protein sequence, read N- to C-terminus: Glutamyl-tRNA(Gln) amidotransferase subunit A (480 aa).

Active-site charge relay system residues include K76 and S151. S175 acts as the Acyl-ester intermediate in catalysis.

It belongs to the amidase family. GatA subfamily. Heterotrimer of A, B and C subunits.

The enzyme catalyses L-glutamyl-tRNA(Gln) + L-glutamine + ATP + H2O = L-glutaminyl-tRNA(Gln) + L-glutamate + ADP + phosphate + H(+). Functionally, allows the formation of correctly charged Gln-tRNA(Gln) through the transamidation of misacylated Glu-tRNA(Gln) in organisms which lack glutaminyl-tRNA synthetase. The reaction takes place in the presence of glutamine and ATP through an activated gamma-phospho-Glu-tRNA(Gln). This is Glutamyl-tRNA(Gln) amidotransferase subunit A from Exiguobacterium sibiricum (strain DSM 17290 / CCUG 55495 / CIP 109462 / JCM 13490 / 255-15).